A 78-amino-acid chain; its full sequence is Small ribosomal subunit protein bS18 (78 aa).

The protein belongs to the bacterial ribosomal protein bS18 family. As to quaternary structure, part of the 30S ribosomal subunit. Forms a tight heterodimer with protein bS6.

Functionally, binds as a heterodimer with protein bS6 to the central domain of the 16S rRNA, where it helps stabilize the platform of the 30S subunit. The chain is Small ribosomal subunit protein bS18 from Alkaliphilus oremlandii (strain OhILAs) (Clostridium oremlandii (strain OhILAs)).